Consider the following 938-residue polypeptide: Isoleucine--tRNA ligase (938 aa).

Residues 58–68 (PYANGSIHIGH) carry the 'HIGH' region motif. K183 is subject to N6-acetyllysine. Position 561 (E561) interacts with L-isoleucyl-5'-AMP. The 'KMSKS' region signature appears at 602–606 (KMSKS). K605 is a binding site for ATP. Zn(2+) is bound by residues C901, C904, C921, and C924.

It belongs to the class-I aminoacyl-tRNA synthetase family. IleS type 1 subfamily. As to quaternary structure, monomer. The cofactor is Zn(2+).

The protein localises to the cytoplasm. It carries out the reaction tRNA(Ile) + L-isoleucine + ATP = L-isoleucyl-tRNA(Ile) + AMP + diphosphate. Its function is as follows. Catalyzes the attachment of isoleucine to tRNA(Ile). As IleRS can inadvertently accommodate and process structurally similar amino acids such as valine, to avoid such errors it has two additional distinct tRNA(Ile)-dependent editing activities. One activity is designated as 'pretransfer' editing and involves the hydrolysis of activated Val-AMP. The other activity is designated 'posttransfer' editing and involves deacylation of mischarged Val-tRNA(Ile). The sequence is that of Isoleucine--tRNA ligase from Escherichia fergusonii (strain ATCC 35469 / DSM 13698 / CCUG 18766 / IAM 14443 / JCM 21226 / LMG 7866 / NBRC 102419 / NCTC 12128 / CDC 0568-73).